We begin with the raw amino-acid sequence, 250 residues long: tRNA:m(4)X modification enzyme TRM13 (250 aa).

Basic residues predominate over residues 1–10; the sequence is MGRAPAKRKP. A disordered region spans residues 1–20; that stretch reads MGRAPAKRKPSSPPPPPPPG. Pro residues predominate over residues 11-20; that stretch reads SSPPPPPPPG. A CHHC U11-48K-type zinc finger spans residues 62–89; sequence LVPCPVDPSHTVLEENLEAHVGKCPLKK. Residues Cys-65, His-71, His-81, and Cys-85 each contribute to the Zn(2+) site.

This sequence belongs to the methyltransferase TRM13 family.

The protein localises to the nucleus. It is found in the cytoplasm. It carries out the reaction cytidine(4) in tRNA(Pro) + S-adenosyl-L-methionine = 2'-O-methylcytidine(4) in tRNA(Pro) + S-adenosyl-L-homocysteine + H(+). The catalysed reaction is cytidine(4) in tRNA(Gly)(GCC) + S-adenosyl-L-methionine = 2'-O-methylcytidine(4) in tRNA(Gly)(GCC) + S-adenosyl-L-homocysteine + H(+). It catalyses the reaction adenosine(4) in tRNA(His) + S-adenosyl-L-methionine = 2'-O-methyladenosine(4) in tRNA(His) + S-adenosyl-L-homocysteine + H(+). Its function is as follows. tRNA methylase that catalyzes 2'-O-methyladenosine (Am) nucleoside formation on tRNA(Gly)(GCC) in vitro. May 2'-O-methylate cytidine(4) in tRNA(Pro) and tRNA(Gly)(GCC), and adenosine(4) in tRNA(His). Involved in salt stress tolerance. The polypeptide is tRNA:m(4)X modification enzyme TRM13 (Oryza sativa subsp. japonica (Rice)).